The following is a 274-amino-acid chain: Trehalose transport system permease protein SugB (274 aa).

The next 6 membrane-spanning stretches (helical) occupy residues 8 to 28 (YWAV…LWIF), 70 to 90 (IGIG…AAYA), 102 to 122 (LIGA…TPLF), 137 to 157 (LILP…SAFF), 182 to 202 (VIVP…FIFA), and 239 to 259 (GSIA…VLIF). Residues 66-259 (LINSIGIGLI…IPIIVFVLIF (194 aa)) form the ABC transmembrane type-1 domain.

This sequence belongs to the binding-protein-dependent transport system permease family. In terms of assembly, the complex is composed of two ATP-binding proteins (SugC), two transmembrane proteins (Suga and SugB) and a solute-binding protein (LpqY).

Its subcellular location is the cell inner membrane. Functionally, part of the ABC transporter complex LpqY-SugA-SugB-SugC, which is highly specific for uptake of trehalose. Involved in the recycling of extracellular trehalose released from trehalose-containing molecules synthesized by M.tuberculosis. Trehalose uptake is essential for virulence. Probably responsible for the translocation of the substrate across the membrane. The sequence is that of Trehalose transport system permease protein SugB (sugB) from Mycobacterium tuberculosis (strain CDC 1551 / Oshkosh).